The chain runs to 1198 residues: Sterol 3-beta-glucosyltransferase (1198 aa).

A compositionally biased stretch (polar residues) spans 1 to 11 (MPITQIISASD). Disordered regions lie at residues 1-89 (MPIT…DNAD) and 124-162 (SQVD…PEVP). A compositionally biased stretch (basic residues) spans 35-51 (RHHRLSRSLSKFKRWRG). Low complexity predominate over residues 52–67 (RSNSSLSMGSSEQQEL). Position 76 is a phosphoserine (Ser-76). The segment covering 146-162 (VKSKKENLKTKSHPEVP) has biased composition (basic and acidic residues). A GRAM 1 domain is found at 187-236 (AKLRQRFCLDEQEPFLNDFPAWLLKDVLVQGHIFITTKHFLFFAYLPKNP). One can recognise a PH domain in the interval 238–336 (SVKMSGNLNI…WVNALKKEQF (99 aa)). The tract at residues 427–465 (KSSFGKETPATAEQKNNGEDSKYLNVPTSAVPSSENGKK) is disordered. Positions 452–461 (VPTSAVPSSE) are enriched in polar residues. The GRAM 2 domain occupies 570–636 (ERFRYHFKFN…VDVETCYKEK (67 aa)). A Phosphoserine modification is found at Ser-693. UDP-alpha-D-glucose contacts are provided by Ser-749, Arg-750, Asp-752, Asn-1025, Asn-1053, Val-1054, His-1056, His-1069, Ser-1072, Gly-1073, Thr-1074, Asp-1093, and Gln-1094.

Belongs to the glycosyltransferase 28 family.

It is found in the cytoplasm. It localises to the membrane. The catalysed reaction is a sterol + UDP-alpha-D-glucose = a sterol 3-beta-D-glucoside + UDP + H(+). It carries out the reaction ergosterol + UDP-alpha-D-glucose = ergosteryl 3-beta-D-glucoside + UDP + H(+). In terms of biological role, sterol glycosyltransferase responsible for the glycosylation of ergosterol to form ergosterol-glucoside. Also shows activity in vitro on other sterols such as cholesterol, beta-sitosterol, stigmasterol and tomatidine. In contrasts to what is observed in Pichia pastoris and Aspergillus oryzae, is not involved in cytoplasm to vacuole transport (Cvt), pexophagy or nonselective autophagy in Saccharomyces cerevisiae. This Saccharomyces cerevisiae (strain YJM789) (Baker's yeast) protein is Sterol 3-beta-glucosyltransferase.